A 277-amino-acid chain; its full sequence is Large ribosomal subunit protein uL2 (277 aa).

Disordered regions lie at residues M1 to G55 and K217 to R277. A compositionally biased stretch (basic residues) spans L37–G55.

This sequence belongs to the universal ribosomal protein uL2 family. As to quaternary structure, part of the 50S ribosomal subunit. Forms a bridge to the 30S subunit in the 70S ribosome.

Its function is as follows. One of the primary rRNA binding proteins. Required for association of the 30S and 50S subunits to form the 70S ribosome, for tRNA binding and peptide bond formation. It has been suggested to have peptidyltransferase activity; this is somewhat controversial. Makes several contacts with the 16S rRNA in the 70S ribosome. The polypeptide is Large ribosomal subunit protein uL2 (Thermobifida fusca (strain YX)).